Here is a 317-residue protein sequence, read N- to C-terminus: Pectinesterase 31 (317 aa).

The substrate site is built by threonine 91 and glutamine 121. Aspartate 144 serves as the catalytic Proton donor. Residue aspartate 165 is the Nucleophile of the active site. 2 residues coordinate substrate: arginine 222 and tryptophan 224.

It belongs to the pectinesterase family. As to expression, expressed in siliques.

The enzyme catalyses [(1-&gt;4)-alpha-D-galacturonosyl methyl ester](n) + n H2O = [(1-&gt;4)-alpha-D-galacturonosyl](n) + n methanol + n H(+). It functions in the pathway glycan metabolism; pectin degradation; 2-dehydro-3-deoxy-D-gluconate from pectin: step 1/5. Its activity is regulated as follows. Does not require salt for activity. Not inhibited by kiwi pectin methylesterase inhibitor (PMEI). Functionally, acts in the modification of cell walls via demethylesterification of cell wall pectin. Acts in a blockwise manner, resulting in a cell wall rigidification. In Arabidopsis thaliana (Mouse-ear cress), this protein is Pectinesterase 31 (PME31).